A 306-amino-acid chain; its full sequence is Non-homologous end joining protein Ku 2 (306 aa).

Residues 21-206 (ISFGLVNIGV…EVSKQEIDMA (186 aa)) enclose the Ku domain. The segment at 233–306 (LIDAKTKGTK…GSRDKTRKRA (74 aa)) is disordered. Residues 274–290 (RTSRRKTTASASRRRSS) are compositionally biased toward basic residues. A compositionally biased stretch (basic and acidic residues) spans 291–300 (SNREKTGSRD).

It belongs to the prokaryotic Ku family. As to quaternary structure, homodimer. Interacts with LigD.

With LigD forms a non-homologous end joining (NHEJ) DNA repair enzyme, which repairs dsDNA breaks with reduced fidelity. Binds linear dsDNA with 5'- and 3'- overhangs but not closed circular dsDNA nor ssDNA. Recruits and stimulates the ligase activity of LigD. This Saccharopolyspora erythraea (strain ATCC 11635 / DSM 40517 / JCM 4748 / NBRC 13426 / NCIMB 8594 / NRRL 2338) protein is Non-homologous end joining protein Ku 2.